The following is a 285-amino-acid chain: MPSRLSFHKYQGLGNDFILVDNRHQPQPCLTPEEAVALCNRRFGVGADGVIFLLPGQEGADFSMRLFNSDGSEAEMCGNGIRCLARFLQDLGIPGQDGAYQIHTLAGRIVPQVRPDGLVTVDMGIPRLLAGQIPTTLAKPEEKVVRQPLQVGGREWAVTAVSMGNPHCVVFLEEGGSLEELDLERVGPLFEHHPAFPERTNTEFAQVLGPNYLRLRVWERGAGVTLACGTGACAALVAAVLEERAEPQATVELPGGNLEIRWDPDTQHVWMTGPALPVFSGTTAE.

2 residues coordinate substrate: asparagine 15 and asparagine 68. The active-site Proton donor is the cysteine 77. Substrate contacts are provided by residues glycine 78–asparagine 79, asparagine 165, asparagine 201, and glutamate 219–arginine 220. Cysteine 228 acts as the Proton acceptor in catalysis. Residue glycine 229 to threonine 230 coordinates substrate.

This sequence belongs to the diaminopimelate epimerase family. As to quaternary structure, homodimer.

Its subcellular location is the cytoplasm. It carries out the reaction (2S,6S)-2,6-diaminopimelate = meso-2,6-diaminopimelate. The protein operates within amino-acid biosynthesis; L-lysine biosynthesis via DAP pathway; DL-2,6-diaminopimelate from LL-2,6-diaminopimelate: step 1/1. Its function is as follows. Catalyzes the stereoinversion of LL-2,6-diaminopimelate (L,L-DAP) to meso-diaminopimelate (meso-DAP), a precursor of L-lysine and an essential component of the bacterial peptidoglycan. This Synechococcus sp. (strain JA-3-3Ab) (Cyanobacteria bacterium Yellowstone A-Prime) protein is Diaminopimelate epimerase.